Here is a 430-residue protein sequence, read N- to C-terminus: Histidine--tRNA ligase (430 aa).

Belongs to the class-II aminoacyl-tRNA synthetase family. As to quaternary structure, homodimer.

It localises to the cytoplasm. The enzyme catalyses tRNA(His) + L-histidine + ATP = L-histidyl-tRNA(His) + AMP + diphosphate + H(+). The sequence is that of Histidine--tRNA ligase from Chlamydia caviae (strain ATCC VR-813 / DSM 19441 / 03DC25 / GPIC) (Chlamydophila caviae).